We begin with the raw amino-acid sequence, 229 residues long: RNA pyrophosphohydrolase (229 aa).

A Nudix hydrolase domain is found at 6 to 149 (GFRPNVGIIL…KRGVYEMALT (144 aa)). The Nudix box motif lies at 38 to 59 (GGIDRGETPEQAMFRELHEEVG). The interval 191–229 (KPGMELPPGASFDPDPQNSVPAPLEALPTLPVPKKPLDA) is disordered. Residues 220 to 229 (LPVPKKPLDA) are compositionally biased toward pro residues.

Belongs to the Nudix hydrolase family. RppH subfamily. The cofactor is a divalent metal cation.

Its function is as follows. Accelerates the degradation of transcripts by removing pyrophosphate from the 5'-end of triphosphorylated RNA, leading to a more labile monophosphorylated state that can stimulate subsequent ribonuclease cleavage. The sequence is that of RNA pyrophosphohydrolase from Acidovorax ebreus (strain TPSY) (Diaphorobacter sp. (strain TPSY)).